The sequence spans 87 residues: Small ribosomal subunit protein uS17 (87 aa).

It belongs to the universal ribosomal protein uS17 family. As to quaternary structure, part of the 30S ribosomal subunit.

Functionally, one of the primary rRNA binding proteins, it binds specifically to the 5'-end of 16S ribosomal RNA. The protein is Small ribosomal subunit protein uS17 of Thiobacillus denitrificans (strain ATCC 25259 / T1).